Reading from the N-terminus, the 201-residue chain is Sterile alpha motif domain-containing protein 12 (201 aa).

Residues 77–143 form the SAM domain; the sequence is WTQQDVCKWL…LQQVLQLKVR (67 aa).

As to expression, expressed in the brain.

The protein is Sterile alpha motif domain-containing protein 12 (SAMD12) of Homo sapiens (Human).